Here is a 128-residue protein sequence, read N- to C-terminus: Aspartate 1-decarboxylase (128 aa).

The active-site Schiff-base intermediate with substrate; via pyruvic acid is Ser-25. The residue at position 25 (Ser-25) is a Pyruvic acid (Ser). Thr-57 lines the substrate pocket. The Proton donor role is filled by Tyr-58. Substrate is bound at residue 73 to 75 (GSA).

The protein belongs to the PanD family. In terms of assembly, heterooctamer of four alpha and four beta subunits. The cofactor is pyruvate. Post-translationally, is synthesized initially as an inactive proenzyme, which is activated by self-cleavage at a specific serine bond to produce a beta-subunit with a hydroxyl group at its C-terminus and an alpha-subunit with a pyruvoyl group at its N-terminus.

The protein localises to the cytoplasm. The enzyme catalyses L-aspartate + H(+) = beta-alanine + CO2. It participates in cofactor biosynthesis; (R)-pantothenate biosynthesis; beta-alanine from L-aspartate: step 1/1. In terms of biological role, catalyzes the pyruvoyl-dependent decarboxylation of aspartate to produce beta-alanine. This Paraburkholderia phymatum (strain DSM 17167 / CIP 108236 / LMG 21445 / STM815) (Burkholderia phymatum) protein is Aspartate 1-decarboxylase.